We begin with the raw amino-acid sequence, 132 residues long: Putative RNase AF_2433 (132 aa).

Active-site residues include Arg-90 and His-95. Residues 90–97 carry the RX(4)HXY motif motif; the sequence is RNWLVHRY. At Tyr-97 the chain carries O-di-AMP-tyrosine.

This sequence belongs to the HepT RNase toxin family. As to quaternary structure, homodimer, probably forms a complex with cognate antitoxin AF_2432. Modified by cognate antitoxin AF_2432; probably at least 2 successive AMPylation events occur on Tyr-97.

In terms of biological role, probable toxic component of a putative type VII toxin-antitoxin (TA) system, probably an RNase. Probably neutralized by cognate antitoxin AF_2432. Neutralization may be due to AMPylation by AF_2432. This Archaeoglobus fulgidus (strain ATCC 49558 / DSM 4304 / JCM 9628 / NBRC 100126 / VC-16) protein is Putative RNase AF_2433.